Here is a 202-residue protein sequence, read N- to C-terminus: Imidazoleglycerol-phosphate dehydratase (202 aa).

The protein belongs to the imidazoleglycerol-phosphate dehydratase family.

It is found in the cytoplasm. It catalyses the reaction D-erythro-1-(imidazol-4-yl)glycerol 3-phosphate = 3-(imidazol-4-yl)-2-oxopropyl phosphate + H2O. It functions in the pathway amino-acid biosynthesis; L-histidine biosynthesis; L-histidine from 5-phospho-alpha-D-ribose 1-diphosphate: step 6/9. In Rhizobium etli (strain ATCC 51251 / DSM 11541 / JCM 21823 / NBRC 15573 / CFN 42), this protein is Imidazoleglycerol-phosphate dehydratase.